Consider the following 208-residue polypeptide: FMN-dependent NADH:quinone oxidoreductase 2 (208 aa).

It belongs to the azoreductase type 1 family. Homodimer. The cofactor is FMN.

It catalyses the reaction 2 a quinone + NADH + H(+) = 2 a 1,4-benzosemiquinone + NAD(+). It carries out the reaction N,N-dimethyl-1,4-phenylenediamine + anthranilate + 2 NAD(+) = 2-(4-dimethylaminophenyl)diazenylbenzoate + 2 NADH + 2 H(+). Its function is as follows. Quinone reductase that provides resistance to thiol-specific stress caused by electrophilic quinones. Also exhibits azoreductase activity. Catalyzes the reductive cleavage of the azo bond in aromatic azo compounds to the corresponding amines. The protein is FMN-dependent NADH:quinone oxidoreductase 2 of Bacillus anthracis.